Here is a 460-residue protein sequence, read N- to C-terminus: Lysosomal proton-coupled steroid conjugate and bile acid symporter SLC46A3 (460 aa).

Positions 1–25 are cleaved as a signal peptide; it reads MKISFIEPAILLNAFAMTLTIPLTA. Residues 26 to 73 are Extracellular-facing; it reads QYVYRRIWEETGNYTFASNSNGSECDQNKSSSIFAFREEVQKKASLFN. Asn38, Asn46, and Asn53 each carry an N-linked (GlcNAc...) asparagine glycan. The helical transmembrane segment at 74 to 94 threads the bilayer; sequence LQVEMSALIPGLVSTFMLLAS. Over 95 to 111 the chain is Cytoplasmic; it reads SDNHGRKLPMVLSSLGS. A helical transmembrane segment spans residues 112–132; that stretch reads LGTNTWLCMMSYFDLPLQLLI. Residues 133–135 are Extracellular-facing; that stretch reads AST. The chain crosses the membrane as a helical span at residues 136–156; the sequence is FIGALFGNYTTFWGACFAYIV. At 157-170 the chain is on the cytoplasmic side; the sequence is DQQKEYKHRIIRIA. Residues 171-191 traverse the membrane as a helical segment; the sequence is ILDFMLGVVTGLTGLSSGYFI. Residues 192-195 are Extracellular-facing; that stretch reads RELG. The helical transmembrane segment at 196–216 threads the bilayer; that stretch reads FVWSYFITAMVLIVNLAYILF. Over 217-257 the chain is Cytoplasmic; sequence FLNDPIKESSSQIVTMSCIESLKDLFYRTYMLFKNGSSKRQ. A helical transmembrane segment spans residues 258–278; that stretch reads ALLCLLIFTLVIYFFVIIGIS. The Extracellular portion of the chain corresponds to 279 to 301; the sequence is PIFTLYELGPPLCWNEVYIGYGS. Residues 302–322 form a helical membrane-spanning segment; that stretch reads ALGSVSFLSSFLGIWLFSYCL. The Cytoplasmic segment spans residues 323 to 324; it reads KD. Residues 325 to 345 form a helical membrane-spanning segment; that stretch reads IHIAYIGIFTTMVGMTLAAFT. At 346 to 347 the chain is on the extracellular side; it reads RT. A helical transmembrane segment spans residues 348-368; that stretch reads TLMMFLVRIPFIFTIMPLSVL. The Cytoplasmic segment spans residues 369 to 381; that stretch reads RSMLSKVVHSTEQ. A helical transmembrane segment spans residues 382–402; sequence GALFACIAFLETLAGVTSTSA. Over 403 to 410 the chain is Extracellular; that stretch reads YSGIYSAT. The helical transmembrane segment at 411 to 431 threads the bilayer; the sequence is VAWYPGFIFLLSAGLLVLPAI. At 432–460 the chain is on the cytoplasmic side; the sequence is SLCCVKSIGWEEGSYTLLVHEEPSEHTSD. Residues 446–449 carry the Tyrosine-based lysosomal-sorting motif motif; that stretch reads YTLL.

The protein belongs to the major facilitator superfamily. SLC46A family. In terms of tissue distribution, expressed in liver, kidney, small intestine and colon.

The protein localises to the lysosome membrane. It carries out the reaction estrone 3-sulfate(out) + n H(+)(out) = estrone 3-sulfate(in) + n H(+)(in). The enzyme catalyses 25-hydroxyvitamin D3 sulfate(out) + n H(+)(out) = 25-hydroxyvitamin D3 sulfate(in) + n H(+)(in). The catalysed reaction is cholate(out) + n H(+)(out) = cholate(in) + n H(+)(in). It catalyses the reaction glycocholate(out) + n H(+)(out) = glycocholate(in) + n H(+)(in). It carries out the reaction taurocholate(out) + n H(+)(out) = taurocholate(in) + n H(+)(in). The enzyme catalyses dehydroepiandrosterone 3-sulfate(out) + n H(+)(out) = dehydroepiandrosterone 3-sulfate(in) + n H(+)(in). The catalysed reaction is N-acetyl-D-muramoyl-L-alanyl-D-isoglutamine(out) + n H(+)(out) = N-acetyl-D-muramoyl-L-alanyl-D-isoglutamine(in) + n H(+)(in). It catalyses the reaction 2',3'-cGAMP(out) + n H(+)(out) = 2',3'-cGAMP(in) + n H(+)(in). Functionally, lysosomal proton-coupled steroid conjugate and bile acid transporter. Preferentially recognizes lipophilic steroid conjugates or bile acis as endogenous substrates and seems to mediate escape from lysosomes to the cytoplasm. Modulates hepatic cytosolic copper homeostasis, maybe acting as a lysosomal copper transporter and sequestering copper ions in the lysosome. Delivers pathogen-associated molecular patterns to cytosolic pattern recognition receptors as part of the innate immune response to microbes. Selectively transports bacterial muramyl dipeptide (MDP) into the cytosol for recognition by NOD2, triggering inflammatory responses. Likely acts as a redundant importer of cyclic GMP-AMP dinucleotides (cGAMPs) in monocyte and macrophage cell lineages. The transport mechanism, its electrogenicity and stoichiometry remain to be elucidated. This is Lysosomal proton-coupled steroid conjugate and bile acid symporter SLC46A3 (Slc46a3) from Mus musculus (Mouse).